The primary structure comprises 358 residues: MSGVQLSSLSTLNYRNLAPGTLHFPAGVTGVFGENGAGKTNLLEAAYLALTGLTDVTRLEQLIQSGEREAYVRADVQQGGSLSIQEVGLGRGRRHLKVDGVRAKTGDLPRGSAVWIRPEDSELVFGPPAGRRAYLDALLSRLSARYGQQLARYERTVAQRNAALKAGEDWAMHVWDDALVKLGTDIMLFRRRALTRLDELAREANAQLGSRKPLTLTLSESTTPETYAHDLAARRAEELSRGATVTGPHRDDLILTLGELPASEYASRGEGRTVALALRCAELELLAEKFGEKPVLLIDDFTAELDPGRRGFLLDLAASVPQAIVTGTERAPGAALTLRAHAGRFTEESRPATVGVGA.

33-40 (GENGAGKT) contacts ATP.

This sequence belongs to the RecF family.

It is found in the cytoplasm. The RecF protein is involved in DNA metabolism; it is required for DNA replication and normal SOS inducibility. RecF binds preferentially to single-stranded, linear DNA. It also seems to bind ATP. The protein is DNA replication and repair protein RecF of Deinococcus geothermalis (strain DSM 11300 / CIP 105573 / AG-3a).